The chain runs to 654 residues: Beta-mannosyltransferase 2 (654 aa).

The Cytoplasmic segment spans residues 1–37 (MLAWLRHRIRSYNTSTYSSILPSASFGKVYKIGTKLN). Residues 38–58 (FTLLALCLLLACSVFFNYFYL) form a helical membrane-spanning segment. Residues 59-654 (ADNNGLDIDT…ANGNGKGSSS (596 aa)) lie on the Extracellular side of the membrane.

It belongs to the BMT family.

Its subcellular location is the membrane. Its function is as follows. Beta-mannosyltransferase involved in cell wall biosynthesis. Required for the addition of beta-mannose to the acid-labile fraction of cell wall phosphopeptidomannan. The sequence is that of Beta-mannosyltransferase 2 (RHD1) from Candida albicans (strain SC5314 / ATCC MYA-2876) (Yeast).